Here is a 491-residue protein sequence, read N- to C-terminus: MRSSLAPGIWYRAFILLITFLIYTCYHMSRKPISVVKSRLHHNCSEVIQPVNSTHSLNDTTWCNWAPFDKSNYKELLGAVDNAFLVAYAIGMFISGIFGERLPLRYYLTAGMLLSGLFTSLFGLGYFWNIHVLWYFVLVQIFNGLVQTTGWPAVVSCVGNWFGKGKRGLIMGIWNSHTSVGNILGSLLAGVWVDQQWGLSFVVPGVITAIMGIITFFFLIEYPEDVDCSPPQHHGNPEESQDQPEDPANGPSCNKESSLESAVTCSKEASAQPSAISFFGALRIPGVVEFSLCLLFAKLVSYTFLYWLPLYISNVVHFTAKEAGDLSTLFDVGGIIGGILAGLVSDYINGRATTCCVMLILAAPMMFLYNHVGQRGIGISIVMLLICGALVNGPYALITTAVSADLGTHKSLKGNAKALSTVTAIIDGTGSIGAALGPLLAGLISPTGWNNVFYMLIAADVLACLLLCRLVYKEILAWKSSLSKDRGYREM.

The helical transmembrane segment at leucine 5 to cysteine 25 threads the bilayer. 3 N-linked (GlcNAc...) asparagine glycosylation sites follow: asparagine 43, asparagine 52, and asparagine 58. Helical transmembrane passes span glycine 78 to phenylalanine 98, leucine 108 to isoleucine 130, valine 132 to valine 154, leucine 169 to alanine 189, and serine 200 to isoleucine 220. The segment at serine 229 to serine 257 is disordered. The next 6 helical transmembrane spans lie at leucine 292–isoleucine 312, threonine 328–isoleucine 348, alanine 352–valine 372, isoleucine 377–leucine 397, alanine 424–isoleucine 444, and valine 452–tyrosine 472.

This sequence belongs to the major facilitator superfamily. Organophosphate:Pi antiporter (OPA) (TC 2.A.1.4) family.

It is found in the endoplasmic reticulum membrane. The catalysed reaction is D-glucose 6-phosphate(in) + phosphate(out) = D-glucose 6-phosphate(out) + phosphate(in). With respect to regulation, inhibited by vanadate but not by chlorogenic acid. Inorganic phosphate and glucose-6-phosphate antiporter. May transport cytoplasmic glucose-6-phosphate into the lumen of the endoplasmic reticulum and translocate inorganic phosphate into the opposite direction. Independent of a lumenal glucose-6-phosphatase. May not play a role in homeostatic regulation of blood glucose levels. This is Glucose-6-phosphate exchanger SLC37A2 from Bos taurus (Bovine).